The sequence spans 262 residues: ClpXP adapter protein SpxH (262 aa).

Belongs to the SpxH family. In terms of assembly, interacts with Spx.

It localises to the cytoplasm. In terms of biological role, adapter protein required for efficient degradation of Spx by ClpXP under non-stress conditions. Interaction with Spx stabilizes Spx and exposes the C-terminus of Spx for recognition and proteolysis by ClpXP. This is ClpXP adapter protein SpxH from Staphylococcus saprophyticus subsp. saprophyticus (strain ATCC 15305 / DSM 20229 / NCIMB 8711 / NCTC 7292 / S-41).